Here is a 932-residue protein sequence, read N- to C-terminus: Glycine dehydrogenase (decarboxylating) (932 aa).

N6-(pyridoxal phosphate)lysine is present on Lys-685.

This sequence belongs to the GcvP family. As to quaternary structure, the glycine cleavage system is composed of four proteins: P, T, L and H. The cofactor is pyridoxal 5'-phosphate.

It catalyses the reaction N(6)-[(R)-lipoyl]-L-lysyl-[glycine-cleavage complex H protein] + glycine + H(+) = N(6)-[(R)-S(8)-aminomethyldihydrolipoyl]-L-lysyl-[glycine-cleavage complex H protein] + CO2. In terms of biological role, the glycine cleavage system catalyzes the degradation of glycine. The P protein binds the alpha-amino group of glycine through its pyridoxal phosphate cofactor; CO(2) is released and the remaining methylamine moiety is then transferred to the lipoamide cofactor of the H protein. The sequence is that of Glycine dehydrogenase (decarboxylating) from Brucella suis (strain ATCC 23445 / NCTC 10510).